The following is a 486-amino-acid chain: Small ribosomal subunit protein uS4m (486 aa).

The 70-residue stretch at 103–172 (KRLDFALFRA…AKKPSFQEAL (70 aa)) folds into the S4 RNA-binding domain.

Belongs to the universal ribosomal protein uS4 family. As to quaternary structure, component of the mitochondrial small ribosomal subunit (mt-SSU). Mature yeast 74S mitochondrial ribosomes consist of a small (37S) and a large (54S) subunit. The 37S small subunit contains a 15S ribosomal RNA (15S mt-rRNA) and 34 different proteins. The 54S large subunit contains a 21S rRNA (21S mt-rRNA) and 46 different proteins. uS3m, uS4m and uS5m form the narrow entry site of the mRNA channel.

Its subcellular location is the mitochondrion. Functionally, component of the mitochondrial ribosome (mitoribosome), a dedicated translation machinery responsible for the synthesis of mitochondrial genome-encoded proteins, including at least some of the essential transmembrane subunits of the mitochondrial respiratory chain. The mitoribosomes are attached to the mitochondrial inner membrane and translation products are cotranslationally integrated into the membrane. In Saccharomyces cerevisiae (strain ATCC 204508 / S288c) (Baker's yeast), this protein is Small ribosomal subunit protein uS4m (NAM9).